A 65-amino-acid polypeptide reads, in one-letter code: MIIWILPCRMQMSLKKEERINISKTSSSKIKEINQLRHIIRKKNRQIQILTIMLNILRCCRRMKE.

It belongs to the rhabdoviruses C protein family.

Its function is as follows. Seems to stimulates transcription by the viral polymerase. May play a role in viral pathogenesis or transmission by insects vectors. The protein is Protein C' (P) of Vesicular stomatitis New Jersey virus (strain Missouri subtype Hazelhurst) (VSNJV).